Here is a 997-residue protein sequence, read N- to C-terminus: Protein translocase subunit SecA (997 aa).

Residues Q84, 102-106 (GEGKT), and D582 contribute to the ATP site. A disordered region spans residues 950–997 (PYVPVPEAKPEPSEVFGVERKRATPPPQPGLSRAERRRLMRQEKKRKK). The span at 957–971 (AKPEPSEVFGVERKR) shows a compositional bias: basic and acidic residues. The span at 984-997 (ERRRLMRQEKKRKK) shows a compositional bias: basic residues.

The protein belongs to the SecA family. As to quaternary structure, monomer and homodimer. Part of the essential Sec protein translocation apparatus which comprises SecA, SecYEG and auxiliary proteins SecDF. Other proteins may also be involved.

It localises to the cell inner membrane. It is found in the cytoplasm. It catalyses the reaction ATP + H2O + cellular proteinSide 1 = ADP + phosphate + cellular proteinSide 2.. Functionally, part of the Sec protein translocase complex. Interacts with the SecYEG preprotein conducting channel. Has a central role in coupling the hydrolysis of ATP to the transfer of proteins into and across the cell membrane, serving as an ATP-driven molecular motor driving the stepwise translocation of polypeptide chains across the membrane. This Thermus thermophilus (strain ATCC BAA-163 / DSM 7039 / HB27) protein is Protein translocase subunit SecA.